The following is a 383-amino-acid chain: MSLKQHTQAIFRQQFSHEPNITIKAPGRVNLIGEHTDYNDGFVLPCAIDYETVISCSKRDDRQIHVIAADYDNQQDIFSLDEPIVPHAQYRWADYVRGVVKHLQLRHADFGGASLVISGNVPQGAGLSSSASLEVAVGQALQSLYQLPLSGVELALNGQEAENQFVGCNCGIMDQLISALGQQDHALLIDCRTLETRAVPMPENVAVVIINSNVKRGLVDSEYNTRRQQCETAARFFGVKALRDVDPNLFFSIQDELDPVVAKRARHVITENERTLTAADALAAGDLKLMGQLMHESHISMRDDFEITVPPIDSLVDIVKSVIGEQGGVRMTGGGFGGCIVALMPNSLVEQVRAAVAQQYPAYSGGRTETFYVCQASQGAGLC.

34–37 contacts substrate; that stretch reads EHTD. 124-130 is a binding site for ATP; the sequence is GAGLSSS. Residues Ser130 and Glu162 each contribute to the Mg(2+) site. Asp174 acts as the Proton acceptor in catalysis. Tyr223 is a substrate binding site.

The protein belongs to the GHMP kinase family. GalK subfamily.

Its subcellular location is the cytoplasm. It carries out the reaction alpha-D-galactose + ATP = alpha-D-galactose 1-phosphate + ADP + H(+). Its pathway is carbohydrate metabolism; galactose metabolism. Its function is as follows. Catalyzes the transfer of the gamma-phosphate of ATP to D-galactose to form alpha-D-galactose-1-phosphate (Gal-1-P). This Yersinia enterocolitica serotype O:8 / biotype 1B (strain NCTC 13174 / 8081) protein is Galactokinase.